The primary structure comprises 309 residues: Porphobilinogen deaminase (309 aa).

S-(dipyrrolylmethanemethyl)cysteine is present on cysteine 244.

The protein belongs to the HMBS family. As to quaternary structure, monomer. Dipyrromethane serves as cofactor.

The catalysed reaction is 4 porphobilinogen + H2O = hydroxymethylbilane + 4 NH4(+). It participates in porphyrin-containing compound metabolism; protoporphyrin-IX biosynthesis; coproporphyrinogen-III from 5-aminolevulinate: step 2/4. Its function is as follows. Tetrapolymerization of the monopyrrole PBG into the hydroxymethylbilane pre-uroporphyrinogen in several discrete steps. This is Porphobilinogen deaminase from Rhizobium meliloti (strain 1021) (Ensifer meliloti).